The following is a 144-amino-acid chain: uncharacterized protein (144 aa).

The interval 98–127 (PLADGATVDSQASENGEKEAQPTPPKEGLL) is disordered.

This is an uncharacterized protein from Aedes vexans (Inland floodwater mosquito).